Here is a 747-residue protein sequence, read N- to C-terminus: Myotubularin-related protein 12 (747 aa).

Residues 1–14 (MLGKGVVGGGGGTK) are compositionally biased toward gly residues. The segment at 1-21 (MLGKGVVGGGGGTKGPKPSFV) is disordered. The Myotubularin phosphatase domain occupies 205-643 (FDTLKDWCWE…PEIKVWAQRY (439 aa)). Residues 449-558 (VPVFLLFLDC…KGQRKGMRFK (110 aa)) form an interaction with MTM1 region. A phosphoserine mark is found at Ser-564, Ser-601, and Ser-716.

The protein belongs to the protein-tyrosine phosphatase family. Non-receptor class myotubularin subfamily. Heterodimer with lipid phosphatase MTM1. Heterodimer with lipid phosphatase MTMR2.

It localises to the cytoplasm. Its subcellular location is the sarcoplasmic reticulum. The protein resides in the myofibril. It is found in the sarcomere. Functionally, acts as an adapter for the myotubularin-related phosphatases. Regulates phosphatase MTM1 protein stability and possibly its intracellular location. By stabilizing MTM1 protein levels, required for skeletal muscle maintenance but not for myogenesis. The polypeptide is Myotubularin-related protein 12 (MTMR12) (Pongo abelii (Sumatran orangutan)).